Reading from the N-terminus, the 125-residue chain is Small ribosomal subunit protein eS8 (125 aa).

It belongs to the eukaryotic ribosomal protein eS8 family. In terms of assembly, part of the 30S ribosomal subunit.

This Methanosphaerula palustris (strain ATCC BAA-1556 / DSM 19958 / E1-9c) protein is Small ribosomal subunit protein eS8.